A 257-amino-acid chain; its full sequence is Putative hydro-lyase Bcenmc03_3969 (257 aa).

This sequence belongs to the D-glutamate cyclase family.

This chain is Putative hydro-lyase Bcenmc03_3969, found in Burkholderia orbicola (strain MC0-3).